We begin with the raw amino-acid sequence, 161 residues long: 2-C-methyl-D-erythritol 2,4-cyclodiphosphate synthase (161 aa).

A divalent metal cation contacts are provided by D9 and H11. Residues 9 to 11 (DFH) and 37 to 38 (HS) contribute to the 4-CDP-2-C-methyl-D-erythritol 2-phosphate site. H45 is an a divalent metal cation binding site. 4-CDP-2-C-methyl-D-erythritol 2-phosphate is bound by residues 59 to 61 (DIG), 64 to 68 (FPDTD), 135 to 138 (TTTE), and R145.

Belongs to the IspF family. Homotrimer. A divalent metal cation serves as cofactor.

The catalysed reaction is 4-CDP-2-C-methyl-D-erythritol 2-phosphate = 2-C-methyl-D-erythritol 2,4-cyclic diphosphate + CMP. Its pathway is isoprenoid biosynthesis; isopentenyl diphosphate biosynthesis via DXP pathway; isopentenyl diphosphate from 1-deoxy-D-xylulose 5-phosphate: step 4/6. Functionally, involved in the biosynthesis of isopentenyl diphosphate (IPP) and dimethylallyl diphosphate (DMAPP), two major building blocks of isoprenoid compounds. Catalyzes the conversion of 4-diphosphocytidyl-2-C-methyl-D-erythritol 2-phosphate (CDP-ME2P) to 2-C-methyl-D-erythritol 2,4-cyclodiphosphate (ME-CPP) with a corresponding release of cytidine 5-monophosphate (CMP). This chain is 2-C-methyl-D-erythritol 2,4-cyclodiphosphate synthase, found in Leptospira interrogans serogroup Icterohaemorrhagiae serovar copenhageni (strain Fiocruz L1-130).